The following is a 154-amino-acid chain: AP-1 complex subunit sigma-3 (154 aa).

This sequence belongs to the adaptor complexes small subunit family. As to quaternary structure, adaptor protein complex 1 (AP-1) is a heterotetramer composed of two large adaptins (gamma-type subunit AP1G1 and beta-type subunit AP1B1), a medium adaptin (mu-type subunit AP1M1 or AP1M2) and a small adaptin (sigma-type subunit AP1S1 or AP1S2 or AP1S3). As to expression, widely expressed.

The protein resides in the golgi apparatus. It is found in the cytoplasmic vesicle membrane. It localises to the membrane. The protein localises to the clathrin-coated pit. Its function is as follows. Subunit of clathrin-associated adaptor protein complex 1 that plays a role in protein sorting in the late-Golgi/trans-Golgi network (TGN) and/or endosomes. The AP complexes mediate both the recruitment of clathrin to membranes and the recognition of sorting signals within the cytosolic tails of transmembrane cargo molecules. Involved in TLR3 trafficking. The chain is AP-1 complex subunit sigma-3 (AP1S3) from Homo sapiens (Human).